A 106-amino-acid polypeptide reads, in one-letter code: MSTNNMSDPRRPNKVLRYKPPPSECNPALDDPTPDYMNLLGMIFSMCGLMLKLKWCAWVAVYCSFISFANSRSSEDTKQMMSSFMLSISAVVMSYLQNPQPMTPPW.

The tract at residues 1-29 (MSTNNMSDPRRPNKVLRYKPPPSECNPAL) is disordered. Ser2 bears the N-acetylserine mark. Residues 2 to 32 (STNNMSDPRRPNKVLRYKPPPSECNPALDDP) are Cytoplasmic-facing. A helical membrane pass occupies residues 33–51 (TPDYMNLLGMIFSMCGLML). Lys52 is a topological domain (lumenal). The helical transmembrane segment at 53–70 (LKWCAWVAVYCSFISFAN) threads the bilayer. Residues 71–74 (SRSS) are Cytoplasmic-facing. The chain crosses the membrane as a helical span at residues 75-95 (EDTKQMMSSFMLSISAVVMSY). Topologically, residues 96 to 106 (LQNPQPMTPPW) are lumenal.

Belongs to the Asterix family. Component of the PAT complex, composed of WDR83OS/Asterix and CCDC47. The PAT complex is part of the multi-pass translocon (MPT) complex, composed of three subcomplexes, the GEL complex (composed of RAB5IF/OPTI and TMCO1), the BOS complex (composed of NCLN/Nicalin, NOMO1 and TMEM147) and the PAT complex (composed of WDR83OS/Asterix and CCDC47). The MPT complex associates with the SEC61 complex.

The protein resides in the endoplasmic reticulum membrane. Its function is as follows. Component of the multi-pass translocon (MPT) complex that mediates insertion of multi-pass membrane proteins into the lipid bilayer of membranes. The MPT complex takes over after the SEC61 complex: following membrane insertion of the first few transmembrane segments of proteins by the SEC61 complex, the MPT complex occludes the lateral gate of the SEC61 complex to promote insertion of subsequent transmembrane regions. Within the MPT complex, the PAT subcomplex sequesters any highly polar regions in the transmembrane domains away from the non-polar membrane environment until they can be buried in the interior of the fully assembled protein. Within the PAT subcomplex, WDR83OS/Asterix binds to and redirects the substrate to a location behind the SEC61 complex. The polypeptide is PAT complex subunit Asterix (WDR83OS) (Canis lupus familiaris (Dog)).